A 194-amino-acid polypeptide reads, in one-letter code: MPNWGGGNKCGACGRTVYHAEEVQCDGRSFHRCCFLCMVCRKNLDSTTVAIHDAEVYCKSCYGKKYGPKGYGYGQGAGTLNMDRGERLGIKPESTPSPHRPTTNPNTSKFAQKFGGAEKCSRCGDSVYAAEKVIGAGKPWHKNCFRCAKCGKSLESTTLTEKEGEIYCKGCYAKNFGPKGFGYGQGAGALVHAQ.

The LIM zinc-binding 1 domain occupies 10-61; sequence CGACGRTVYHAEEVQCDGRSFHRCCFLCMVCRKNLDSTTVAIHDAEVYCKSC. Residues 64-69 carry the Nuclear localization signal motif; that stretch reads KKYGPK. The LIM zinc-binding 2 domain occupies 120–171; the sequence is CSRCGDSVYAAEKVIGAGKPWHKNCFRCAKCGKSLESTTLTEKEGEIYCKGC.

Its subcellular location is the nucleus. In terms of biological role, totally down-regulated in transformed cells. May therefore take part in the control of cell growth and differentiation. The polypeptide is Cysteine and glycine-rich protein 2 (CSRP2) (Gallus gallus (Chicken)).